The following is a 296-amino-acid chain: MFSGSIPALVTPFRDGAFDEKAFRRLVDWQIENGSSALVPCGTTGEASTLSNAEHHRVIEVCVEQAAGRVPVIAGCGSNDTMNALLHMNFSKKCGAQAALCVAPYYNRPSQAGIIAHFSYLAEHNDLPIVLYNVPGRTVTDILPETVCELAKRYPDKIIGIKDASGDLSRVTDHRMGIGKHFCQLSGDDELALPANAAGAVGCISVTANVAPRLCADFQAACAANDLEKARELNDKLYPLHYAMFEDASPGPVKYALSRVFADINEDLRLPMVPCNEAARKAVDAALVHAGLLELA.

T44 provides a ligand contact to pyruvate. Y132 serves as the catalytic Proton donor/acceptor. K162 functions as the Schiff-base intermediate with substrate in the catalytic mechanism. I204 contributes to the pyruvate binding site.

It belongs to the DapA family. In terms of assembly, homotetramer; dimer of dimers.

It localises to the cytoplasm. It carries out the reaction L-aspartate 4-semialdehyde + pyruvate = (2S,4S)-4-hydroxy-2,3,4,5-tetrahydrodipicolinate + H2O + H(+). Its pathway is amino-acid biosynthesis; L-lysine biosynthesis via DAP pathway; (S)-tetrahydrodipicolinate from L-aspartate: step 3/4. In terms of biological role, catalyzes the condensation of (S)-aspartate-beta-semialdehyde [(S)-ASA] and pyruvate to 4-hydroxy-tetrahydrodipicolinate (HTPA). In Novosphingobium aromaticivorans (strain ATCC 700278 / DSM 12444 / CCUG 56034 / CIP 105152 / NBRC 16084 / F199), this protein is 4-hydroxy-tetrahydrodipicolinate synthase.